Reading from the N-terminus, the 173-residue chain is ATP-dependent protease subunit HslV (173 aa).

T2 is a catalytic residue. 3 residues coordinate Na(+): G157, C160, and T163.

Belongs to the peptidase T1B family. HslV subfamily. As to quaternary structure, a double ring-shaped homohexamer of HslV is capped on each side by a ring-shaped HslU homohexamer. The assembly of the HslU/HslV complex is dependent on binding of ATP.

The protein resides in the cytoplasm. The enzyme catalyses ATP-dependent cleavage of peptide bonds with broad specificity.. Allosterically activated by HslU binding. Functionally, protease subunit of a proteasome-like degradation complex believed to be a general protein degrading machinery. This is ATP-dependent protease subunit HslV from Nitrosomonas eutropha (strain DSM 101675 / C91 / Nm57).